Reading from the N-terminus, the 332-residue chain is Polygalacturonase inhibitor 1 (332 aa).

The N-terminal stretch at 1 to 24 is a signal peptide; sequence MASTASFMLAVLLAVAVAAAPARA. Disulfide bonds link cysteine 27–cysteine 58 and cysteine 59–cysteine 66. 10 LRR repeats span residues 72-96, 97-118, 119-142, 143-166, 167-192, 193-215, 216-236, 237-259, 260-283, and 284-310; these read VNNVFIDGANDVRGQIPSAVAGLTA, LMSLSLFRLPGLSGPIPACLTA, LSNLQFLTISHTNVSGVIPDSLAR, IRSLDSVDLSHNSLTGPIPNSFSD, LPNLRSLDLRSNKLTGCIPAGLVQGQ, FRSLILSYNQLTGPIPRDDAQDE, INTVDLSHNRLTGDASFLFAA, GRPIGKVDLSWNDLDFDLSKLVF, PPELTYLDLSHNRIRGTVPRSLAA, and LSTLQTLDLSYNRLCGPLPRLHGVIRH. Asparagine 131 carries N-linked (GlcNAc...) asparagine glycosylation. 3 disulfide bridges follow: cysteine 298–cysteine 312, cysteine 298–cysteine 320, and cysteine 320–cysteine 329.

This sequence belongs to the polygalacturonase-inhibiting protein family. Highly expressed in calli, immature and mature panicles, and in three inner floral organs: lodicules, stamens and carpels. Expressed at low level in seedling roots and mature stems.

The protein localises to the secreted. It localises to the cell wall. Its function is as follows. Inhibitor of fungal polygalacturonase. Regulates floral organ number. This is Polygalacturonase inhibitor 1 from Oryza sativa subsp. japonica (Rice).